A 419-amino-acid polypeptide reads, in one-letter code: tRNA modification GTPase MnmE (419 aa).

Positions 2, 59, and 99 each coordinate (6S)-5-formyl-5,6,7,8-tetrahydrofolate. One can recognise a TrmE-type G domain in the interval 197 to 343; it reads GLSVVIAGPP…LHTMIVEMAR (147 aa). Residue Asn-207 coordinates K(+). GTP-binding positions include 207–212, 226–232, and 251–254; these read NAGKST, SPVAGTT, and DTAG. Ser-211 is a Mg(2+) binding site. The K(+) site is built by Ser-226, Val-228, and Thr-231. Thr-232 is a Mg(2+) binding site. Lys-419 is a binding site for (6S)-5-formyl-5,6,7,8-tetrahydrofolate.

It belongs to the TRAFAC class TrmE-Era-EngA-EngB-Septin-like GTPase superfamily. TrmE GTPase family. As to quaternary structure, homodimer. Heterotetramer of two MnmE and two MnmG subunits. K(+) serves as cofactor.

It is found in the cytoplasm. Functionally, exhibits a very high intrinsic GTPase hydrolysis rate. Involved in the addition of a carboxymethylaminomethyl (cmnm) group at the wobble position (U34) of certain tRNAs, forming tRNA-cmnm(5)s(2)U34. The polypeptide is tRNA modification GTPase MnmE (Sphingopyxis alaskensis (strain DSM 13593 / LMG 18877 / RB2256) (Sphingomonas alaskensis)).